We begin with the raw amino-acid sequence, 370 residues long: 4-hydroxy-3-methylbut-2-en-1-yl diphosphate synthase (flavodoxin) (370 aa).

The [4Fe-4S] cluster site is built by Cys-270, Cys-273, Cys-305, and Glu-312.

It belongs to the IspG family. Requires [4Fe-4S] cluster as cofactor.

It carries out the reaction (2E)-4-hydroxy-3-methylbut-2-enyl diphosphate + oxidized [flavodoxin] + H2O + 2 H(+) = 2-C-methyl-D-erythritol 2,4-cyclic diphosphate + reduced [flavodoxin]. Its pathway is isoprenoid biosynthesis; isopentenyl diphosphate biosynthesis via DXP pathway; isopentenyl diphosphate from 1-deoxy-D-xylulose 5-phosphate: step 5/6. Functionally, converts 2C-methyl-D-erythritol 2,4-cyclodiphosphate (ME-2,4cPP) into 1-hydroxy-2-methyl-2-(E)-butenyl 4-diphosphate. This is 4-hydroxy-3-methylbut-2-en-1-yl diphosphate synthase (flavodoxin) from Azotobacter vinelandii (strain DJ / ATCC BAA-1303).